The sequence spans 148 residues: Putative transmembrane protein ORF23 (148 aa).

An N-terminal signal peptide occupies residues 1–18 (MVIILLGVSIVVPGLFLA). The Extracellular portion of the chain corresponds to 19-118 (TETPQTNTFE…YVGWPSGAET (100 aa)). The helical transmembrane segment at 119–139 (IITNIADIIIMATAVMIIGAI) threads the bilayer. Over 140-148 (YTGYKVSIK) the chain is Cytoplasmic.

The protein resides in the host membrane. The protein is Putative transmembrane protein ORF23 of His1 virus (isolate Australia/Victoria) (His1V).